A 168-amino-acid chain; its full sequence is PTS system glucose-specific EIIA component (168 aa).

Residues 38 to 142 form the PTS EIIA type-1 domain; that stretch reads DEVFSNKIVG…STLTPVIISN (105 aa). 2 residues coordinate Zn(2+): His-75 and His-90. The active-site Tele-phosphohistidine intermediate; for EIIA activity is His-90. His-90 is subject to Phosphohistidine; by HPr.

The cofactor is Zn(2+).

The protein resides in the cytoplasm. Its function is as follows. The phosphoenolpyruvate-dependent sugar phosphotransferase system (sugar PTS), a major carbohydrate active transport system, catalyzes the phosphorylation of incoming sugar substrates concomitantly with their translocation across the cell membrane. The enzyme II complex composed of PtsG and Crr is involved in glucose transport. The chain is PTS system glucose-specific EIIA component (crr) from Buchnera aphidicola subsp. Baizongia pistaciae (strain Bp).